A 287-amino-acid chain; its full sequence is Large ribosomal subunit protein uL2 (287 aa).

The disordered stretch occupies residues 221–287 (RGSVMNPCDH…SKRSRGGRDS (67 aa)). The span at 271–287 (LRKRRKTSKRSRGGRDS) shows a compositional bias: basic residues.

It belongs to the universal ribosomal protein uL2 family. Part of the 50S ribosomal subunit. Forms a bridge to the 30S subunit in the 70S ribosome.

Its function is as follows. One of the primary rRNA binding proteins. Required for association of the 30S and 50S subunits to form the 70S ribosome, for tRNA binding and peptide bond formation. It has been suggested to have peptidyltransferase activity; this is somewhat controversial. Makes several contacts with the 16S rRNA in the 70S ribosome. This is Large ribosomal subunit protein uL2 from Synechococcus sp. (strain CC9605).